The sequence spans 296 residues: Inactive uridine phosphorylase B (296 aa).

This sequence belongs to the PNP/UDP phosphorylase family. Homodimer.

The polypeptide is Inactive uridine phosphorylase B (Schistosoma mansoni (Blood fluke)).